We begin with the raw amino-acid sequence, 345 residues long: UPF0324 membrane protein HH_1161 (345 aa).

Helical transmembrane passes span 7–29 (GFLY…SATL), 33–50 (LSPL…SPFY), 90–112 (LGLN…AIFI), 122–141 (ISLL…ILAL), 154–176 (VALG…IYYA), 186–208 (WGIF…AISP), 215–237 (IIVK…YIIF), 262–281 (LYIP…NSFI), 293–312 (FASK…QIDW), and 322–344 (TFAL…VYIM).

The protein belongs to the UPF0324 family.

Its subcellular location is the cell membrane. This is UPF0324 membrane protein HH_1161 from Helicobacter hepaticus (strain ATCC 51449 / 3B1).